Consider the following 95-residue polypeptide: Co-chaperonin GroES (95 aa).

This sequence belongs to the GroES chaperonin family. As to quaternary structure, heptamer of 7 subunits arranged in a ring. Interacts with the chaperonin GroEL.

It is found in the cytoplasm. Functionally, together with the chaperonin GroEL, plays an essential role in assisting protein folding. The GroEL-GroES system forms a nano-cage that allows encapsulation of the non-native substrate proteins and provides a physical environment optimized to promote and accelerate protein folding. GroES binds to the apical surface of the GroEL ring, thereby capping the opening of the GroEL channel. The polypeptide is Co-chaperonin GroES (Deinococcus radiodurans (strain ATCC 13939 / DSM 20539 / JCM 16871 / CCUG 27074 / LMG 4051 / NBRC 15346 / NCIMB 9279 / VKM B-1422 / R1)).